We begin with the raw amino-acid sequence, 778 residues long: Transcription factor kayak (778 aa).

Composition is skewed to low complexity over residues 24 to 54 and 77 to 98; these read AQQLQHQQQQQQQQQQQTQLQQTPHAAHTQQ and QYYQQQQQQQQQEQQMLRQRQL. Disordered stretches follow at residues 24 to 57, 76 to 130, 183 to 223, 294 to 320, 356 to 414, and 427 to 478; these read AQQLQHQQQQQQQQQQQTQLQQTPHAAHTQQNGL, NQYY…HQLR, QPTA…TTNG, APLVNNNNNNNGNGNGNGNGNGNVLAS, ASVM…GTGG, and RNTN…RKRR. The span at 99-108 shows a compositional bias: polar residues; sequence PTQQPAASYE. Composition is skewed to low complexity over residues 109-130 and 183-222; these read QQQQQPQQHQHLQQQQQQHQLR and QPTAAVATTTPTQKATPTKTTPTNNPTTTTNNSTTTTTTN. Over residues 382–402 the composition is skewed to low complexity; it reads ISDTSSGATDSTSYQNGHMMG. The span at 403–414 shows a compositional bias: gly residues; the sequence is NSGGGNGGGTGG. Residues 427–436 show a composition bias toward polar residues; sequence RNTNTSNSAT. Residues 457–520 enclose the bZIP domain; sequence EEKRRIRRER…NQLEYFLQAH (64 aa). Residues 459–478 form a basic motif region; that stretch reads KRRIRRERNKQAAARCRKRR. Residues 485 to 513 are leucine-zipper; sequence LTEEVELLEKRGENLKKEMELLNETKNQL. Positions 550–571 are enriched in low complexity; it reads GSCGSGSSHHNNNSNSNDSSSG. Disordered regions lie at residues 550–594 and 756–778; these read GSCG…DLKP and TSQNKHPLELPTPTTEPSKLVSL. Over residues 579-589 the composition is skewed to polar residues; sequence TLNSTGRSNSP. Ser-588 bears the Phosphoserine mark.

This sequence belongs to the bZIP family. Fos subfamily. In terms of assembly, homodimer. Heterodimer with Jra. The kay-Jra heterodimer binds more stably to the AP-1 site than either of the two proteins alone.

The protein localises to the nucleus. In terms of biological role, developmentally regulated transcription factor AP-1 binds and recognizes the enhancer DNA sequence: 5'-TGA[CG]TCA-3'. May play a role in the function or determination of a particular subset of cells in the developing embryo. It is able to carry out its function either independently of or in conjunction with Jra. In Drosophila pseudoobscura pseudoobscura (Fruit fly), this protein is Transcription factor kayak.